The primary structure comprises 288 residues: Polyamine aminopropyltransferase (288 aa).

The PABS domain maps to 9–242; the sequence is SEWLDEYHQG…GLWSWTFASM (234 aa). Gln-36 provides a ligand contact to S-methyl-5'-thioadenosine. Spermidine is bound by residues His-67 and Asp-91. Residues Glu-111 and 143–144 contribute to the S-methyl-5'-thioadenosine site; that span reads NG. The active-site Proton acceptor is the Asp-162. Residue Pro-169 participates in S-methyl-5'-thioadenosine binding.

This sequence belongs to the spermidine/spermine synthase family. In terms of assembly, homodimer or homotetramer.

It is found in the cytoplasm. It carries out the reaction S-adenosyl 3-(methylsulfanyl)propylamine + putrescine = S-methyl-5'-thioadenosine + spermidine + H(+). Its pathway is amine and polyamine biosynthesis; spermidine biosynthesis; spermidine from putrescine: step 1/1. Catalyzes the irreversible transfer of a propylamine group from the amino donor S-adenosylmethioninamine (decarboxy-AdoMet) to putrescine (1,4-diaminobutane) to yield spermidine. In Prochlorococcus marinus (strain NATL2A), this protein is Polyamine aminopropyltransferase.